Consider the following 657-residue polypeptide: Glycogen debranching enzyme (657 aa).

Catalysis depends on Asp336, which acts as the Nucleophile. Residue Glu371 is the Proton donor of the active site. Residues 460–479 (ANGEENRDGTNNNYSNNHGK) form a disordered region.

Belongs to the glycosyl hydrolase 13 family.

The catalysed reaction is Hydrolysis of (1-&gt;6)-alpha-D-glucosidic linkages to branches with degrees of polymerization of three or four glucose residues in limit dextrin.. The protein operates within glycan degradation; glycogen degradation. Removes maltotriose and maltotetraose chains that are attached by 1,6-alpha-linkage to the limit dextrin main chain, generating a debranched limit dextrin. The protein is Glycogen debranching enzyme of Escherichia coli O17:K52:H18 (strain UMN026 / ExPEC).